The following is a 217-amino-acid chain: Membrane-associated progesterone receptor component 2 (217 aa).

An O-linked (Xyl...) (chondroitin sulfate) serine glycan is attached at Ser15. The helical transmembrane segment at 40–62 (ALLATGGEMLLNVALVALVLLGA) threads the bilayer. Phosphoserine is present on residues Ser84, Ser98, and Ser202. Residues 96–195 (DFSLEQLRQY…EKYDYVGRLL (100 aa)) enclose the Cytochrome b5 heme-binding domain. The segment at 196 to 217 (KPGEEPSEYTDEEDTKDHSKQD) is disordered. Residues 200-209 (EPSEYTDEED) are compositionally biased toward acidic residues. Tyr204 carries the phosphotyrosine modification. Position 205 is a phosphothreonine (Thr205).

Belongs to the cytochrome b5 family. MAPR subfamily. Interacts with PGRMC1. Interacts with AAAS.

The protein resides in the membrane. The protein localises to the nucleus envelope. It localises to the endoplasmic reticulum. Its subcellular location is the secreted. Its function is as follows. Required for the maintenance of uterine histoarchitecture and normal female reproductive lifespan. May serve as a universal non-classical progesterone receptor in the uterus. Intracellular heme chaperone required for delivery of labile, or signaling heme, to the nucleus. Plays a role in adipocyte function and systemic glucose homeostasis. In brown fat, which has a high demand for heme, delivery of labile heme in the nucleus regulates the activity of heme-responsive transcriptional repressors such as NR1D1 and BACH1. This Rattus norvegicus (Rat) protein is Membrane-associated progesterone receptor component 2.